Here is a 1215-residue protein sequence, read N- to C-terminus: Homeodomain-interacting protein kinase 3 (1215 aa).

Residue lysine 27 forms a Glycyl lysine isopeptide (Lys-Gly) (interchain with G-Cter in SUMO2) linkage. Positions 197–525 constitute a Protein kinase domain; sequence YEVLDFLGRG…PAETLNHPFV (329 aa). Residues 203 to 211 and lysine 226 each bind ATP; that span reads LGRGTFGQV. The active-site Proton acceptor is the aspartate 322. Tyrosine 359 is subject to Phosphotyrosine. The interval 767–944 is interaction with AR; sequence QNRGILVKLM…NSMSDEEQES (178 aa). Residues 796 to 891 are interaction with FAS; sequence NTNIPHSAFI…SQRHSLRECK (96 aa). Positions 855–1011 are required for localization to nuclear speckles; sequence QTIIIADSPS…ENGLNADEHM (157 aa). The tract at residues 866–918 is SUMO interaction motifs (SIM); required for nuclear localization and kinase activity; sequence AVSVITISSDTDEEETSQRHSLRECKGSLDCEACQSTLNIDRMCSLSSPDSTL. Residues 870–880 are interaction with UBL1; the sequence is ITISSDTDEEE. The segment covering 912–929 has biased composition (low complexity); sequence SSPDSTLSTSSSGQSSPS. The segment at 912–987 is disordered; that stretch reads SSPDSTLSTS…ELVSSADTET (76 aa). Polar residues predominate over residues 945–957; it reads SCDTVDGSPTSDS. A Glycyl lysine isopeptide (Lys-Gly) (interchain with G-Cter in SUMO) cross-link involves residue lysine 1208.

It belongs to the protein kinase superfamily. CMGC Ser/Thr protein kinase family. HIPK subfamily. As to quaternary structure, interacts with Nkx1-2. Interacts with FAS and DAXX. Probably part of a complex consisting of HIPK3, FAS and FADD. Interacts with and stabilizes ligand-bound androgen receptor (AR). Interacts with UBL1/SUMO-1. Binds to NR5A1/SF1, SPEN/MINT and RUNX2. In terms of processing, autophosphorylated, but autophosphorylation is not required for catalytic activity. Post-translationally, may be sumoylated. Overexpressed in multidrug resistant cells. Highly expressed in heart and skeletal muscle, and at lower levels in placenta, pancreas, brain, spleen, prostate, thymus, testis, small intestine, colon and leukocytes. Not found in liver and lung.

It localises to the cytoplasm. It is found in the nucleus. It carries out the reaction L-seryl-[protein] + ATP = O-phospho-L-seryl-[protein] + ADP + H(+). It catalyses the reaction L-threonyl-[protein] + ATP = O-phospho-L-threonyl-[protein] + ADP + H(+). Serine/threonine-protein kinase involved in transcription regulation, apoptosis and steroidogenic gene expression. Phosphorylates JUN and RUNX2. Seems to negatively regulate apoptosis by promoting FADD phosphorylation. Enhances androgen receptor-mediated transcription. May act as a transcriptional corepressor for NK homeodomain transcription factors. The phosphorylation of NR5A1 activates SF1 leading to increased steroidogenic gene expression upon cAMP signaling pathway stimulation. In osteoblasts, supports transcription activation: phosphorylates RUNX2 that synergizes with SPEN/MINT to enhance FGFR2-mediated activation of the osteocalcin FGF-responsive element (OCFRE). The polypeptide is Homeodomain-interacting protein kinase 3 (HIPK3) (Homo sapiens (Human)).